The chain runs to 481 residues: Protein hedgehog (481 aa).

Cysteine 93 is lipidated: N-palmitoyl cysteine. Ca(2+) is bound by residues glutamate 157, glutamate 158, aspartate 163, threonine 193, glutamate 194, aspartate 197, and aspartate 199. Glycine 265 carries the Cholesterol glycine ester lipid modification.

The protein belongs to the hedgehog family. Interacts with shf. The C-terminal part of the hedgehog protein precursor displays an autoproteolysis activity that results in the cleavage of the full-length protein into two parts (N-product and C-product). In addition, the C-terminal part displays a cholesterol transferase activity that results by the covalent attachment of a cholesterol moiety to the C-terminal of the newly generated N-product. The N-product is the active species in both local and long-range signaling, whereas the C-product has no signaling activity. Post-translationally, cholesterylation is required for N-product targeting to lipid rafts and multimerization. In terms of processing, N-palmitoylation by Rasp of the hedgehog N-product, within the secretory pathway, is required for the embryonic and larval patterning activities of the hedgehog signal.

The protein resides in the nucleus. It localises to the cytoplasm. The protein localises to the cell membrane. The enzyme catalyses glycyl-L-cysteinyl-[protein] + cholesterol + H(+) = [protein]-C-terminal glycyl cholesterol ester + N-terminal L-cysteinyl-[protein]. Its function is as follows. The C-terminal part of the hedgehog protein precursor displays an autoproteolysis activity that results in the cleavage of the full-length protein into two parts (N-product and C-product). In addition, the C-terminal part displays a cholesterol transferase activity that results by the covalent attachment of a cholesterol moiety to the C-terminal of the newly generated N-product. Once cleaved, the C-product has no signaling activity and diffuses from the cell. The dually lipidated hedgehog protein N-product is a morphogen which is essential for a variety of patterning events during development. Establishes the anterior-posterior axis of the embryonic segments and patterns the larval imaginal disks. Binds to the patched (ptc) receptor, which functions in association with smoothened (smo), to activate the transcription of target genes wingless (wg), decapentaplegic (dpp) and ptc. In the absence of hh, ptc represses the constitutive signaling activity of smo through fused (fu). Essential component of a signaling pathway which regulates the Duox-dependent gut immune response to bacterial uracil; required to activate Cad99C-dependent endosome formation, norpA-dependent Ca2+ mobilization and p38 MAPK, which are essential steps in the Duox-dependent production of reactive oxygen species (ROS) in response to intestinal bacterial infection. During photoreceptor differentiation, it up-regulates transcription of Ubr3, which in turn promotes the hh-signaling pathway by mediating the ubiquitination and degradation of cos. This Drosophila persimilis (Fruit fly) protein is Protein hedgehog.